The sequence spans 309 residues: UDP-N-acetylenolpyruvoylglucosamine reductase (309 aa).

One can recognise an FAD-binding PCMH-type domain in the interval 34-221 (RVGGPAQVLF…TAAREAAQPI (188 aa)). Arg179 is a catalytic residue. The Proton donor role is filled by Ser228. Glu298 is an active-site residue.

This sequence belongs to the MurB family. Requires FAD as cofactor.

The protein localises to the cytoplasm. The enzyme catalyses UDP-N-acetyl-alpha-D-muramate + NADP(+) = UDP-N-acetyl-3-O-(1-carboxyvinyl)-alpha-D-glucosamine + NADPH + H(+). Its pathway is cell wall biogenesis; peptidoglycan biosynthesis. In terms of biological role, cell wall formation. This is UDP-N-acetylenolpyruvoylglucosamine reductase from Methylorubrum extorquens (strain CM4 / NCIMB 13688) (Methylobacterium extorquens).